The primary structure comprises 210 residues: Redox-sensing transcriptional repressor Rex (210 aa).

The segment at residues Val-16–Phe-55 is a DNA-binding region (H-T-H motif). An NAD(+)-binding site is contributed by Gly-90–Gly-95.

It belongs to the transcriptional regulatory Rex family. Homodimer.

It localises to the cytoplasm. In terms of biological role, modulates transcription in response to changes in cellular NADH/NAD(+) redox state. The protein is Redox-sensing transcriptional repressor Rex of Desulfitobacterium hafniense (strain DSM 10664 / DCB-2).